Consider the following 336-residue polypeptide: Serpentine receptor class alpha-10 (336 aa).

At 1–28 (MGPITANSSKCATEDQMILQTSLLLRIN) the chain is on the extracellular side. Residues 29–49 (VIIMTIVAIITFILTYKALFI) traverse the membrane as a helical segment. Residues 50–61 (LKIRPIFHSSTK) are Cytoplasmic-facing. Residues 62–82 (ILLYTSLLFVNVHAVIFMVIQ) traverse the membrane as a helical segment. Residues 83 to 107 (NTALIRSFTLSDKPCEIMRTTLECR) lie on the Extracellular side of the membrane. A helical membrane pass occupies residues 108–128 (FQNHVLIFGIAGVNFNQFGLT). The Cytoplasmic segment spans residues 129–148 (VDRLLATIIPQSYSHMGALP). Residues 149–169 (GVILSVLVVACSIAAPLIIAI) form a helical membrane-spanning segment. Over 170–192 (GDPYDDIVPNCFFFPEHSAPRAN) the chain is Extracellular. Residues 193–213 (IFLVTLSTLVITSIFLNFIII) form a helical membrane-spanning segment. Topologically, residues 214–243 (YANKKLEKGCRTRFYVTQRYQKREALISTR) are cytoplasmic. A helical transmembrane segment spans residues 244–264 (IISYIAASQFLGLTLYSTMVL). Residues 265-280 (TLRLHKSMIPISIYHN) lie on the Extracellular side of the membrane. Residues 281-301 (MVWWAYTVPFAAVSLPALLIY) traverse the membrane as a helical segment. Topologically, residues 302–336 (RINQVGSNRKRVINRITAKVETQEEHMKSLKELWA) are cytoplasmic.

This sequence belongs to the nematode receptor-like protein sra family. As to expression, expressed in the URX sensory neuron, the ALA interneuron and in additional interneurons, pharyngeal neurons and muscle.

The protein localises to the membrane. This is Serpentine receptor class alpha-10 (sra-10) from Caenorhabditis elegans.